Reading from the N-terminus, the 171-residue chain is Large ribosomal subunit protein bL9 (171 aa).

The protein belongs to the bacterial ribosomal protein bL9 family.

Binds to the 23S rRNA. The sequence is that of Large ribosomal subunit protein bL9 from Orientia tsutsugamushi (strain Ikeda) (Rickettsia tsutsugamushi).